The primary structure comprises 429 residues: MKKQRNLRSMAAQAIEQVVEQGQSLSNILPPLQQKVSDKDKALLQELCFGVLRTLSQLDWLINKLMARPMTGKQRTVHYLIMVGLYQLLYTRIPPHAALAETVEGAVAIKRPQLKGLINGVLRQFQRQQDELLAEFNASDARYLHPSWLLKRLQKAYPEQWQSIVEANNQRPPMWLRVNRTHHSRDSWLALLDEAGMKGFPHADYPDAVQLETPAPVHALPGFEEGWVTVQDASAQGCMTWLAPQNGEHILDLCAGPGGKTTHILEVAPEAQVLAVDIDEQRLSRVYDNLKRLGMKATVKQGDGRYPSQWCGEQQFDRILLDAPCSATGVIRRHPDIKWLRRDRDIPELAQLQSEILDAIWSHLKSGGTLVYATCSVLPEENSLQIKAFLQRTADAELCETGTPEQPGKQNLPGAEEGDGFFYAKLIKK.

Residues 254–260, Asp-277, Asp-303, and Asp-322 each bind S-adenosyl-L-methionine; that span reads CAGPGGK. The active-site Nucleophile is the Cys-375.

The protein belongs to the class I-like SAM-binding methyltransferase superfamily. RsmB/NOP family.

The protein resides in the cytoplasm. The catalysed reaction is cytidine(967) in 16S rRNA + S-adenosyl-L-methionine = 5-methylcytidine(967) in 16S rRNA + S-adenosyl-L-homocysteine + H(+). Functionally, specifically methylates the cytosine at position 967 (m5C967) of 16S rRNA. This Escherichia coli O6:K15:H31 (strain 536 / UPEC) protein is Ribosomal RNA small subunit methyltransferase B.